A 1873-amino-acid polypeptide reads, in one-letter code: SAGA complex subunit Spt20 (1873 aa).

It belongs to the SPT20 family. In terms of assembly, component of the Spt-Ada-Gcn5 acetyltransferase (SAGA) complex consisting of wda/Taf5L, Saf6, Taf9, Taf10b, Taf12, Ada1, Spt3, Spt7, Spt20, Sf3b3, Sf3b5, Nipped-A/Tra1, a histone acetyltransferase (HAT) module made up of Gcn5, Ada2b (Isoform B), Ada3 and Sgf29, and a deubiquitinase (DUB) module made up of not/nonstop, Sgf11 and e(y)2 tethered to SAGA by Atxn7.

Its subcellular location is the nucleus. Functionally, component of the transcription regulatory complex SAGA, a multiprotein complex that activates transcription by remodeling chromatin and mediating histone acetylation and deubiquitination. The SAGA complex predominantly acetylates histone H3. This is SAGA complex subunit Spt20 from Drosophila melanogaster (Fruit fly).